A 158-amino-acid polypeptide reads, in one-letter code: Protein-export protein SecB (158 aa).

It belongs to the SecB family. Homotetramer, a dimer of dimers. One homotetramer interacts with 1 SecA dimer.

The protein localises to the cytoplasm. One of the proteins required for the normal export of preproteins out of the cell cytoplasm. It is a molecular chaperone that binds to a subset of precursor proteins, maintaining them in a translocation-competent state. It also specifically binds to its receptor SecA. In Bartonella quintana (strain Toulouse) (Rochalimaea quintana), this protein is Protein-export protein SecB.